We begin with the raw amino-acid sequence, 262 residues long: Adenosylcobinamide-GDP ribazoletransferase (262 aa).

Transmembrane regions (helical) follow at residues 43-63, 66-86, 120-140, 146-166, 191-211, and 242-262; these read YFGLVGLLVGLLSAIVFWLTQ, LPAGVSVLLAMLVGVLLTGGF, GALALILALLLKWQLLVELAL, AGSALIVAHTVSRVVSASIIF, LLILIASGVLVLLFLKGLAAL, and AAQQIAEIVCYFVLLVVGNIL.

Belongs to the CobS family. Mg(2+) serves as cofactor.

The protein resides in the cell inner membrane. The enzyme catalyses alpha-ribazole + adenosylcob(III)inamide-GDP = adenosylcob(III)alamin + GMP + H(+). It carries out the reaction alpha-ribazole 5'-phosphate + adenosylcob(III)inamide-GDP = adenosylcob(III)alamin 5'-phosphate + GMP + H(+). It functions in the pathway cofactor biosynthesis; adenosylcobalamin biosynthesis; adenosylcobalamin from cob(II)yrinate a,c-diamide: step 7/7. Functionally, joins adenosylcobinamide-GDP and alpha-ribazole to generate adenosylcobalamin (Ado-cobalamin). Also synthesizes adenosylcobalamin 5'-phosphate from adenosylcobinamide-GDP and alpha-ribazole 5'-phosphate. The protein is Adenosylcobinamide-GDP ribazoletransferase of Shewanella baltica (strain OS185).